The chain runs to 148 residues: Large ribosomal subunit protein eL19 (148 aa).

The segment covering 52-76 (KPKKGISSYRSKKIAQQKKKGRRRG) has biased composition (basic residues). The disordered stretch occupies residues 52-95 (KPKKGISSYRSKKIAQQKKKGRRRGPGSIKGAKGARRPKKDEWM).

The protein belongs to the eukaryotic ribosomal protein eL19 family. In terms of assembly, part of the 50S ribosomal subunit.

Functionally, binds to the 23S rRNA. This is Large ribosomal subunit protein eL19 from Methanothermobacter thermautotrophicus (strain ATCC 29096 / DSM 1053 / JCM 10044 / NBRC 100330 / Delta H) (Methanobacterium thermoautotrophicum).